The chain runs to 313 residues: MRLKNHSSVSEFLLLGFPIRPEQGGIFFSLFLAMYLITVLGNLLIILLIRLDSHLHTPMYFFLSHLAFTDISFSSVTVPKMLTKVQNQPIPITYEECVSQTYFFIFFADLDSFLITSMAYDRYMAICHPLHYITIMSQSRCAMLVAVSWVIASACALLHSLLLDQLSFCADHTVPHFFCDLGALLKLSCSDTSLNQLVIFTAGLAAIMLPFLCILISYGRIGFTILQVPTTKGICKALSTCGSHLSVVALYYGSIIGLYFLPPSNSKINNNIVASVMYTVVTPMLNPFIYSLRNKDMKGALKKLLSKKTEFSK.

Over 1–25 the chain is Extracellular; the sequence is MRLKNHSSVSEFLLLGFPIRPEQGG. N-linked (GlcNAc...) asparagine glycosylation is present at Asn5. Residues 26–46 form a helical membrane-spanning segment; the sequence is IFFSLFLAMYLITVLGNLLII. The Cytoplasmic segment spans residues 47–57; sequence LLIRLDSHLHT. The helical transmembrane segment at 58–78 threads the bilayer; that stretch reads PMYFFLSHLAFTDISFSSVTV. Over 79–97 the chain is Extracellular; the sequence is PKMLTKVQNQPIPITYEEC. A disulfide bond links Cys97 and Cys189. The chain crosses the membrane as a helical span at residues 98-118; sequence VSQTYFFIFFADLDSFLITSM. Residues 119–142 are Cytoplasmic-facing; it reads AYDRYMAICHPLHYITIMSQSRCA. Residues 143–163 form a helical membrane-spanning segment; sequence MLVAVSWVIASACALLHSLLL. Residues 164 to 196 are Extracellular-facing; sequence DQLSFCADHTVPHFFCDLGALLKLSCSDTSLNQ. Residues 197–217 traverse the membrane as a helical segment; that stretch reads LVIFTAGLAAIMLPFLCILIS. The Cytoplasmic segment spans residues 218-240; the sequence is YGRIGFTILQVPTTKGICKALST. Residues 241–261 traverse the membrane as a helical segment; it reads CGSHLSVVALYYGSIIGLYFL. Topologically, residues 262 to 271 are extracellular; sequence PPSNSKINNN. A helical membrane pass occupies residues 272 to 292; that stretch reads IVASVMYTVVTPMLNPFIYSL. Over 293 to 313 the chain is Cytoplasmic; the sequence is RNKDMKGALKKLLSKKTEFSK.

This sequence belongs to the G-protein coupled receptor 1 family.

The protein localises to the cell membrane. Its function is as follows. Odorant receptor. The polypeptide is Olfactory receptor 1J1 (Mus musculus (Mouse)).